The following is a 210-amino-acid chain: MARALVLLSVVLVSLLVNQGTASENQRLFNNAVIRVQHLHQLAAKMINDFEDNLLPEERRQLSKIFPLSFCNSDSIEAPTGKDETQKSSMLKLLRISFRLIESWEFPSQTLSGAVSNSLTVGNPNQITEKLADLKVGISVLIKGCLDGQPNMDDNDSLPLPFEDFYLTMGESSLRESFRLLACFKKDMHKVETYLRVANCRRSLDSNCTL.

The first 23 residues, 1-23 (MARALVLLSVVLVSLLVNQGTAS), serve as a signal peptide directing secretion. H38 lines the Zn(2+) pocket. A disulfide bridge links C71 with C183. E192 contacts Zn(2+). C200 and C208 are oxidised to a cystine.

It belongs to the somatotropin/prolactin family.

Its subcellular location is the secreted. Growth hormone plays an important role in growth control. This is Somatotropin (gh) from Ctenopharyngodon idella (Grass carp).